The sequence spans 435 residues: MTIEYLKKASLTSKSDASDVQETVRAILADIEAGGDQVALDYAAKFDRYEGSIILSPEEIEAACAKVPEKLKADIRFAHDNVRRFAETQKATLTDVELEVVPGVITGQKAIPVDAAGCYVPGGRYSHIASAIMTVTTAKVAGCKHIMACSPPRPGVGVAPAIVYAAHICGADTIMAIGGVQGVASMAFGLFGLPKAKILVGPGNQFVAEAKRMLFGRVGIDMIAGPTDSLILADRTADPHIVTTDLVSQAEHGYNSPVWLVTDDRALAEKVIEMIPSYIADLPEVNRDNAAAAWRDYAEVILCADREEMAATSDRYAPEHLTVMAEDLDWWLDRLSCYGSLFLGEESTVSYGDKAAGTNHVLPTSGAASYTGGLSVHKYMKIVTWQRGTREGYKPVAEATARIARLEGMEGHARAADVRLAKYFPDETFDLTANG.

NAD(+) contacts are provided by Tyr-119, Gln-181, and Asn-204. Positions 249 and 252 each coordinate Zn(2+). Catalysis depends on proton acceptor residues Glu-319 and His-320. Positions 353 and 412 each coordinate Zn(2+).

It belongs to the histidinol dehydrogenase family. HpsN subfamily. Zn(2+) serves as cofactor.

The catalysed reaction is (2R)-3-sulfopropanediol + 2 NAD(+) + H2O = (2R)-3-sulfolactate + 2 NADH + 3 H(+). In terms of biological role, catalyzes the NAD-dependent oxidation of (R)-2,3-dihydroxypropane-1-sulfonate to (R)-3-sulfolactate. The sequence is that of Sulfopropanediol 3-dehydrogenase from Ruegeria pomeroyi (strain ATCC 700808 / DSM 15171 / DSS-3) (Silicibacter pomeroyi).